Reading from the N-terminus, the 1252-residue chain is DNA-directed RNA polymerase subunit beta (1252 aa).

This sequence belongs to the RNA polymerase beta chain family. As to quaternary structure, the RNAP catalytic core consists of 2 alpha, 1 beta, 1 beta' and 1 omega subunit. When a sigma factor is associated with the core the holoenzyme is formed, which can initiate transcription.

It carries out the reaction RNA(n) + a ribonucleoside 5'-triphosphate = RNA(n+1) + diphosphate. Its function is as follows. DNA-dependent RNA polymerase catalyzes the transcription of DNA into RNA using the four ribonucleoside triphosphates as substrates. This Chlamydia pneumoniae (Chlamydophila pneumoniae) protein is DNA-directed RNA polymerase subunit beta.